The sequence spans 581 residues: Proline--tRNA ligase (581 aa).

Belongs to the class-II aminoacyl-tRNA synthetase family. ProS type 1 subfamily. Homodimer.

The protein localises to the cytoplasm. The catalysed reaction is tRNA(Pro) + L-proline + ATP = L-prolyl-tRNA(Pro) + AMP + diphosphate. Functionally, catalyzes the attachment of proline to tRNA(Pro) in a two-step reaction: proline is first activated by ATP to form Pro-AMP and then transferred to the acceptor end of tRNA(Pro). As ProRS can inadvertently accommodate and process non-cognate amino acids such as alanine and cysteine, to avoid such errors it has two additional distinct editing activities against alanine. One activity is designated as 'pretransfer' editing and involves the tRNA(Pro)-independent hydrolysis of activated Ala-AMP. The other activity is designated 'posttransfer' editing and involves deacylation of mischarged Ala-tRNA(Pro). The misacylated Cys-tRNA(Pro) is not edited by ProRS. The polypeptide is Proline--tRNA ligase (Methylibium petroleiphilum (strain ATCC BAA-1232 / LMG 22953 / PM1)).